A 125-amino-acid polypeptide reads, in one-letter code: MGKRCPCGTGLTYGECCYRFHSGEWVAPTAEALMRSRFTAFAVGNSQYLLDTWDPETRPSELGLDMGIDFYRLDILETTGGGPFDSTGTVKFQAFYKGLASGVQEEDSTFRKVNGAWVYSTGDVD.

Belongs to the UPF0225 family.

This is UPF0225 protein Cgl1438/cg1626 from Corynebacterium glutamicum (strain ATCC 13032 / DSM 20300 / JCM 1318 / BCRC 11384 / CCUG 27702 / LMG 3730 / NBRC 12168 / NCIMB 10025 / NRRL B-2784 / 534).